A 375-amino-acid polypeptide reads, in one-letter code: uncharacterized protein (375 aa).

The protein belongs to the IMPDH/GMPR family.

This is an uncharacterized protein from Mycobacterium tuberculosis (strain CDC 1551 / Oshkosh).